Reading from the N-terminus, the 709-residue chain is Caprin-1 (709 aa).

Composition is skewed to low complexity over residues 1 to 15 and 22 to 43; these read MPSA…SKSS and GSSG…QHPA. A disordered region spans residues 1 to 50; that stretch reads MPSATSHSGSGSKSSGPPPPSGSSGSEAAAGAGAAAPASQHPATGTGAVQ. An N-acetylproline modification is found at proline 2. Position 2 is an N-acetylalanine (proline 2). Serine 10 is subject to Phosphoserine. Residues 60–94 adopt a coiled-coil conformation; it reads VIDKKLRNLEKKKGKLDDYQERMNKGERLNQDQLD. Serine 115 is subject to Phosphoserine. Residues 125–153 are a coiled coil; it reads KTIKKTARREQLMREEAEQKRLKTVLELQ. The residue at position 165 (arginine 165) is an Omega-N-methylarginine. The disordered stretch occupies residues 260-291; sequence EEAASAPAVEDQVPEAEPEPAEEYTEQSEVES. Over residues 271–291 the composition is skewed to acidic residues; that stretch reads QVPEAEPEPAEEYTEQSEVES. 2 positions are modified to phosphoserine: serine 335 and serine 343. Positions 360–381 are G3BP1-binding; the sequence is QDLMAQMQGPYNFIQDSMLDFE. 3 disordered regions span residues 417-446, 475-499, and 524-709; these read LAQP…TASQ, TDQT…GTSK, and APVP…QQVN. Residues 433 to 446 are compositionally biased toward polar residues; it reads PLVSSTSEGYTASQ. Composition is skewed to low complexity over residues 477–491 and 537–570; these read QTTA…SQPQ and QQNQ…QTVV. A compositionally biased stretch (polar residues) spans 577-605; the sequence is PDQSHQVTGNHQQPPQQNTGFPRSNQPYY. Residue tyrosine 625 is modified to Phosphotyrosine; by EPHA4. Residues arginine 626 and arginine 633 each carry the omega-N-methylarginine modification. Residues tyrosine 636 and tyrosine 639 each carry the phosphotyrosine; by EPHA4 modification. Arginine 640 bears the Omega-N-methylarginine mark. A compositionally biased stretch (polar residues) spans 642–657; it reads SFSNTPNSGYTQSQFS. O-linked (GlcNAc) serine glycans are attached at residues serine 644 and serine 649. Phosphotyrosine; by EPHA4 occurs at positions 651, 662, 665, and 670. Composition is skewed to low complexity over residues 676-686 and 697-709; these read RGSGQSGPRGA and NRGM…QQVN. Arginine 698 is modified (asymmetric dimethylarginine; alternate). Omega-N-methylarginine; alternate is present on arginine 698.

This sequence belongs to the caprin family. As to quaternary structure, may form homomultimers. Interacts with G3BP1; interaction is direct and promotes stress granule formation. Interacts with G3BP2; interaction is direct and promotes stress granule formation. Interacts with PQBP1. Interacts with DDX3X. Interacts (when phosphorylated by EPHA4) with FMR1; interaction with FMR1 promotes formation of a membraneless compartment. (Microbial infection) Interacts with Zika virus capsid protein C; this interaction is probably linked to the inhibition of stress granules formation by the virus. In terms of assembly, (Microbial infection) Interacts with rotavirus A non-structural protein 5; this interaction probably plays a role in the sequestration of CAPRIN1 in viral factories. As to quaternary structure, (Microbial infection) Interacts with Japanese encephalitis virus capsid protein C; this interaction is involved in the suppression of the integrated stress response by the virus. In terms of processing, tyrosine phosphorylation by EPHA4 promotes interaction with FMR1 and liquid-liquid phase separation (LLPS) for the formation of a membraneless compartment that concentrates mRNAs with associated regulatory factors. O-glycosylated (O-GlcNAcylated), in a cell cycle-dependent manner. O-glycosylation by OGT inhibit ability to undergo liquid-liquid phase separation (LLPS). In terms of tissue distribution, ubiquitous.

The protein localises to the cytoplasm. Its subcellular location is the cytoplasmic ribonucleoprotein granule. The protein resides in the cytosol. It localises to the cell projection. It is found in the dendrite. The protein localises to the lamellipodium. Ability to mediate liquid-liquid phase separation is regulated by ATP: moderate concentrations of ATP enhance phase separation, whereas high concentrations of ATP lead to inhibition of phase separation. In terms of biological role, mRNA-binding protein that acts as a regulator of mRNAs transport, translation and/or stability, and which is involved in neurogenesis, synaptic plasticity in neurons and cell proliferation and migration in multiple cell types. Plays an essential role in cytoplasmic stress granule formation. Acts as an mRNA regulator by mediating formation of some phase-separated membraneless compartment: undergoes liquid-liquid phase separation upon binding to target mRNAs, leading to assemble mRNAs into cytoplasmic ribonucleoprotein granules that concentrate mRNAs with associated regulatory factors. Undergoes liquid-liquid phase separation following phosphorylation and interaction with FMR1, promoting formation of cytoplasmic ribonucleoprotein granules that concentrate mRNAs with factors that inhibit translation and mediate deadenylation of target mRNAs. In these cytoplasmic ribonucleoprotein granules, CAPRIN1 mediates recruitment of CNOT7 deadenylase, leading to mRNA deadenylation and degradation. Binds directly and selectively to MYC and CCND2 mRNAs. In neuronal cells, directly binds to several mRNAs associated with RNA granules, including BDNF, CAMK2A, CREB1, MAP2, NTRK2 mRNAs, as well as to GRIN1 and KPNB1 mRNAs, but not to rRNAs. The sequence is that of Caprin-1 from Homo sapiens (Human).